We begin with the raw amino-acid sequence, 126 residues long: Protein ApaG (126 aa).

Positions 2 to 126 (DVSLPCIKIQ…FRLAVPHVLN (125 aa)) constitute an ApaG domain.

The sequence is that of Protein ApaG from Vibrio cholerae serotype O1 (strain ATCC 39541 / Classical Ogawa 395 / O395).